A 693-amino-acid chain; its full sequence is MSVMGSGLFFFVVGPSGSGKDTLIEGAKAALGPTGRYVFARRAITRPADAGGEAHEALSVDQFDAVLAQGGFLIHWEAHGLKYGLRATLLDDMAAGRHVIANGSRAMVAALAERVPHLVVVEITAPEAVLAERLKGRGREGAENIAARLERKVPPFPESVTVIQVPNDSTPRAGIEKFVAALVAQTARLRLVRMAIETGRRNVAFLARGNTVVAAPDYLGPGRVDLIGEGRSIRAEVALVGDALLPSDAVGLSSEAFGALGLPEGAELVLTRTPVPESRAALRRKIQGATLDEGAYAQVVGDIVEGRYPDSEVAGFLVAADRSLSDDEVLALAKVRAKFASRITWDEPMVVDKHSMGGIPGSRITMIVVPIVAAHGLAIPKTSSRAITSAAGTADAMETLARVDLDSAEVRRTVERARGCIAWNGRLSHSALDDVMNAITRPLGLDSTRWSVASILSKKLAAGSTHVVIDLPFGARARVKGAGEAHEMARLFEQVGAGLGLTVEAIPTDGSAPIGRGIGPALEVRDVLWVLEDHSEAPPDLKEKALFFASRILAWDPAVGPDRARARAEELLASGAARAALERIVEAQGRWSEPVRPARLTHTVTAQNDGQVSDIDGFAVAGIARLAGAPLDKGAGIDLKARVGDVVRAGDPLFVIHASTAADLEAAAGAALAFDGYGIMMDGKAFRRINPER.

The segment at 1–193 (MSVMGSGLFF…AQTARLRLVR (193 aa)) is ribose 1,5-bisphosphokinase. 14–21 (GPSGSGKD) provides a ligand contact to ATP. Residues 194–693 (MAIETGRRNV…KAFRRINPER (500 aa)) form a thymidinephosphorylase region.

This sequence in the N-terminal section; belongs to the ribose 1,5-bisphosphokinase family. In the C-terminal section; belongs to the thymidine/pyrimidine-nucleoside phosphorylase family. Type 2 subfamily.

The enzyme catalyses alpha-D-ribose 1,5-bisphosphate + ATP = 5-phospho-alpha-D-ribose 1-diphosphate + ADP. It catalyses the reaction thymidine + phosphate = 2-deoxy-alpha-D-ribose 1-phosphate + thymine. The protein operates within metabolic intermediate biosynthesis; 5-phospho-alpha-D-ribose 1-diphosphate biosynthesis; 5-phospho-alpha-D-ribose 1-diphosphate from D-ribose 5-phosphate (route II): step 3/3. In terms of biological role, catalyzes the phosphorylation of ribose 1,5-bisphosphate to 5-phospho-D-ribosyl alpha-1-diphosphate (PRPP). The polypeptide is Bifunctional ribose 1,5-bisphosphokinase-thymidine phosphorylase (phnN) (Azorhizobium caulinodans (strain ATCC 43989 / DSM 5975 / JCM 20966 / LMG 6465 / NBRC 14845 / NCIMB 13405 / ORS 571)).